Consider the following 344-residue polypeptide: Aurora kinase B (344 aa).

T35 bears the Phosphothreonine mark. The disordered stretch occupies residues 46–65 (NAQPTAAPGQKVVENSSGTP). A Phosphoserine modification is found at S62. The residue at position 64 (T64) is a Phosphothreonine. The region spanning 77-327 (FEIGRPLGKG…LAQVSAHPWV (251 aa)) is the Protein kinase domain. Residues 83–91 (LGKGKFGNV) and K106 each bind ATP. The active-site Proton acceptor is D200. K215 carries the N6-acetyllysine modification. S227 bears the Phosphoserine mark. At T232 the chain carries Phosphothreonine; by autocatalysis.

This sequence belongs to the protein kinase superfamily. Ser/Thr protein kinase family. Aurora subfamily. In terms of assembly, component of the chromosomal passenger complex (CPC) composed of at least BIRC5/survivin, CDCA8/borealin, INCENP, AURKB or AURKC; predominantly independent AURKB- and AURKC-containing complexes exist. Associates with RACGAP1 during M phase. Interacts with SPDYC; this interaction may be required for proper localization of active, Thr-232-phosphorylated AURKB form during prometaphase and metaphase. Interacts with p53/TP53. Interacts (via the middle kinase domain) with NOC2L (via the N- and C-terminus domains). Interacts with CDCA1. Interacts with EVI5. Interacts with JTB. Interacts with NDC80. Interacts with PSMA3. Interacts with RNF2/RING1B. Interacts with SEPTIN1. Interacts with SIRT2. Interacts with TACC1. Interacts with TTC28. In terms of processing, the phosphorylation of Thr-232 requires the binding to INCENP and occurs by means of an autophosphorylation mechanism. Thr-232 phosphorylation is indispensable for the AURKB kinase activity. Acetylated at Lys-215 by KAT5 at kinetochores, increasing AURKB activity and promoting accurate chromosome segregation in mitosis. Post-translationally, ubiquitinated by different BCR (BTB-CUL3-RBX1) E3 ubiquitin ligase complexes. Ubiquitinated by the BCR(KLHL9-KLHL13) E3 ubiquitin ligase complex, ubiquitination leads to removal from mitotic chromosomes and is required for cytokinesis. During anaphase, the BCR(KLHL21) E3 ubiquitin ligase complex recruits the CPC complex from chromosomes to the spindle midzone and mediates the ubiquitination of AURKB. Ubiquitination of AURKB by BCR(KLHL21) E3 ubiquitin ligase complex may not lead to its degradation by the proteasome. Deubiquitinated by USP35; inhibiting CDH1-mediated degradation of AURKB.

It localises to the nucleus. The protein localises to the chromosome. The protein resides in the centromere. Its subcellular location is the kinetochore. It is found in the cytoplasm. It localises to the cytoskeleton. The protein localises to the spindle. The protein resides in the midbody. It catalyses the reaction L-seryl-[protein] + ATP = O-phospho-L-seryl-[protein] + ADP + H(+). The catalysed reaction is L-threonyl-[protein] + ATP = O-phospho-L-threonyl-[protein] + ADP + H(+). With respect to regulation, activity is greatly increased when AURKB is within the CPC complex. In particular, AURKB-phosphorylated INCENP acts as an activator of AURKB. Positive feedback between HASPIN and AURKB contributes to CPC localization. Functionally, serine/threonine-protein kinase component of the chromosomal passenger complex (CPC), a complex that acts as a key regulator of mitosis. The CPC complex has essential functions at the centromere in ensuring correct chromosome alignment and segregation and is required for chromatin-induced microtubule stabilization and spindle assembly. Involved in the bipolar attachment of spindle microtubules to kinetochores and is a key regulator for the onset of cytokinesis during mitosis. Required for central/midzone spindle assembly and cleavage furrow formation. Key component of the cytokinesis checkpoint, a process required to delay abscission to prevent both premature resolution of intercellular chromosome bridges and accumulation of DNA damage: phosphorylates CHMP4C, leading to retain abscission-competent VPS4 (VPS4A and/or VPS4B) at the midbody ring until abscission checkpoint signaling is terminated at late cytokinesis. AURKB phosphorylates the CPC complex subunits BIRC5/survivin, CDCA8/borealin and INCENP. Phosphorylation of INCENP leads to increased AURKB activity. Other known AURKB substrates involved in centromeric functions and mitosis are CENPA, DES/desmin, GPAF, KIF2C, NSUN2, RACGAP1, SEPTIN1, VIM/vimentin, HASPIN, and histone H3. A positive feedback loop involving HASPIN and AURKB contributes to localization of CPC to centromeres. Phosphorylation of VIM controls vimentin filament segregation in cytokinetic process, whereas histone H3 is phosphorylated at 'Ser-10' and 'Ser-28' during mitosis (H3S10ph and H3S28ph, respectively). AURKB is also required for kinetochore localization of BUB1 and SGO1. Phosphorylation of p53/TP53 negatively regulates its transcriptional activity. Key regulator of active promoters in resting B- and T-lymphocytes: acts by mediating phosphorylation of H3S28ph at active promoters in resting B-cells, inhibiting RNF2/RING1B-mediated ubiquitination of histone H2A and enhancing binding and activity of the USP16 deubiquitinase at transcribed genes. Acts as an inhibitor of CGAS during mitosis: catalyzes phosphorylation of the N-terminus of CGAS during the G2-M transition, blocking CGAS liquid phase separation and activation, and thereby preventing CGAS-induced autoimmunity. Phosphorylates KRT5 during anaphase and telophase. Phosphorylates ATXN10 which promotes phosphorylation of ATXN10 by PLK1 and may play a role in the regulation of cytokinesis and stimulating the proteasomal degradation of ATXN10. The polypeptide is Aurora kinase B (AURKB) (Bos taurus (Bovine)).